We begin with the raw amino-acid sequence, 3987 residues long: Hybrid PKS-NRPS synthetase buaA (3987 aa).

Residues 5–438 (NEPIAIVGSG…GANAHAIVES (434 aa)) enclose the Ketosynthase family 3 (KS3) domain. Residues C176, H315, and H358 each act as for beta-ketoacyl synthase activity in the active site. Residues 546 to 872 (VFTGQGAQWP…RNADDVESFS (327 aa)) form a malonyl-CoA:ACP transacylase (MAT) domain region. The segment at 939 to 1072 (HELLGVRVDS…GAVRLQLGAA (134 aa)) is N-terminal hotdog fold. The PKS/mFAS DH domain occupies 939–1240 (HELLGVRVDS…VAPLVPVTQS (302 aa)). A dehydratase (DH) domain region spans residues 940 to 1238 (ELLGVRVDSL…LQVAPLVPVT (299 aa)). H970 serves as the catalytic Proton acceptor; for dehydratase activity. The segment at 1087–1240 (MNDVNIEHFY…VAPLVPVTQS (154 aa)) is C-terminal hotdog fold. D1147 (proton donor; for dehydratase activity) is an active-site residue. Positions 1399–1583 (YLANLVKQLS…TSTPSHDVFM (185 aa)) are methyltransferase (MT) domain. The ketoreductase (KR) domain stretch occupies residues 2113 to 2285 (TYLLVGLTGE…LPGSVMNLAG (173 aa)). The Carrier 1 domain maps to 2397–2473 (RVLTNGLILT…AMVEDTMERM (77 aa)). S2433 is subject to O-(pantetheine 4'-phosphoryl)serine. The tract at residues 2489 to 2561 (AADRPSAPSD…PPPSSVMSED (73 aa)) is disordered. The span at 2514 to 2525 (HNSEEQESHAME) shows a compositional bias: basic and acidic residues. A compositionally biased stretch (low complexity) spans 2532–2550 (STTSGGECSSTKESSSSEA). The condensation (C) domain stretch occupies residues 2582 to 3001 (MGYGSLQFFF…QLVKMCAYME (420 aa)). An adenylation (A) (KR) domain region spans residues 3042-3448 (LDVAQARPEA…GQLYYEGRIA (407 aa)). In terms of domain architecture, Carrier 2 spans 3564–3644 (ADLSETELAL…AMALKIRNSQ (81 aa)). S3604 is modified (O-(pantetheine 4'-phosphoryl)serine). The segment at 3680 to 3916 (TVVLTGATGY…TGIAAAAVGA (237 aa)) is reductase (R) domain.

This sequence in the C-terminal section; belongs to the NRP synthetase family.

It participates in mycotoxin biosynthesis. Functionally, hybrid PKS-NRPS synthetase; part of the gene cluster that mediates the biosynthesis of burnettramic acids, an unusual class of bolaamphiphilic pyrrolizidinediones that display potent antibacterial, antifungal, and cytotoxic activities. The first step of the biosynthesis of burnettramic acids is the hydroxylation of proline by the proline hydroxylase buaE to generate 4-hydroxyproline. The PKS-NRPS buaA and trans-enoyl reductase buaC construct the highly reduced polyketide chain, and the condensation (C) domain of buaA then catalyzes the amide bond formation with the activated 4-hydroxyproline. This is followed by the R domain releasing the nascent polyketide-peptide directly via a Dieckmann condensation to afford a tetramic acid fused to the hydroxyproline, generating the bicyclic pyrrolidinedione moiety. The cytochrome P450 monooxygenases buaD and buaG are likely responsible for the multiple hydroxylations on the polyketide chain and its terminus, although in a heterologous context, buaD does not appear to be required. Therefore, while buaG may be a multifunctional cytochrome P450 monooxygenase, it cannot be ruled out that the two secondary alcohols on the polyketide chain could have an acetate origin. Finally, the glycosyltransferase buaB transfers beta-D-mannose to the aglycone burnettramic acid A to form burnettramic acid A. Burnettramic acid B is a minor cis-pyrrolizidine epimer of burnettramic acid A and it is likely that small amounts of it form naturally in acidic environments. This is Hybrid PKS-NRPS synthetase buaA from Petromyces alliaceus (Aspergillus alliaceus).